A 122-amino-acid polypeptide reads, in one-letter code: Elsinochromes biosynthesis cluster protein HP4 (122 aa).

In terms of biological role, part of the gene cluster that mediates the biosynthesis of elsinochromes, pigments consisting of at least four interconvertible tautomers (A, B, C and D) that have a core phenolic quinone to which various side chains are attached and which play an important role in fungal pathogenesis. The non-reducing polyketide synthase PKS1 was proposed to iteratively catalyze decarboxylation between acetyl-CoA and malonyl-CoA subunits for polyketide chain elongation. The released polyketide undergoes cyclization to form an aromatic ring, and proceeds via serial modification steps to produce the heptaketide back- bone of elsinochrome. As elsinochrome has a symmetrical structure, two identical heptaketides are fused to form a core 1,2-dihydrobenzo-perylene ring structure, which can then be successively modified to produce the various derivatives of elsinochrome. Some of these reactions may be cooperatively carried out, at least in part, by the products of RDT1, OXR1 and PKS1. PRF1, embedded within the elsinochrome cluster possibly functions to stabilize some of the biosynthetic enzymes required for elsinochrome production. As prefoldin is a hexamer containing 2 a and 4 b subunits, additional prefoldin subunits, whose coding genes may not immediately link to the elsinochrome biosynthetic gene cluster, are required to fulfill the chaperone function. In addition, no methyltransferase-coding gene exists within the biosynthetic gene cluster, even though elsinochrome has four methyl groups at positions C3, C7, C8 and C12. Apparently, the identified gene cluster does not contain the entire entourage of genes responsible for elsinochrome biosynthesis. Once elsinochrome is synthesized, it must be exported outside the fungal cells, which is probably accomplished by the ECT1 transporter, to avoid toxicity. In Elsinoe fawcettii (Citrus scab fungus), this protein is Elsinochromes biosynthesis cluster protein HP4.